We begin with the raw amino-acid sequence, 392 residues long: 23S rRNA (uracil(747)-C(5))-methyltransferase RlmC (392 aa).

Residues C4, C12, C15, and C93 each contribute to the [4Fe-4S] cluster site. Residues Q218, F247, E275, and N321 each coordinate S-adenosyl-L-methionine. C348 acts as the Nucleophile in catalysis.

The protein belongs to the class I-like SAM-binding methyltransferase superfamily. RNA M5U methyltransferase family. RlmC subfamily.

It carries out the reaction uridine(747) in 23S rRNA + S-adenosyl-L-methionine = 5-methyluridine(747) in 23S rRNA + S-adenosyl-L-homocysteine + H(+). Functionally, catalyzes the formation of 5-methyl-uridine at position 747 (m5U747) in 23S rRNA. The sequence is that of 23S rRNA (uracil(747)-C(5))-methyltransferase RlmC from Haemophilus influenzae (strain PittGG).